Here is a 252-residue protein sequence, read N- to C-terminus: Trans-aconitate 2-methyltransferase (252 aa).

Belongs to the methyltransferase superfamily. Tam family.

Its subcellular location is the cytoplasm. The catalysed reaction is trans-aconitate + S-adenosyl-L-methionine = (E)-3-(methoxycarbonyl)pent-2-enedioate + S-adenosyl-L-homocysteine. In terms of biological role, catalyzes the S-adenosylmethionine monomethyl esterification of trans-aconitate. The protein is Trans-aconitate 2-methyltransferase of Enterobacter sp. (strain 638).